A 143-amino-acid polypeptide reads, in one-letter code: Large ribosomal subunit protein uL13 (143 aa).

This sequence belongs to the universal ribosomal protein uL13 family. Part of the 50S ribosomal subunit.

This protein is one of the early assembly proteins of the 50S ribosomal subunit, although it is not seen to bind rRNA by itself. It is important during the early stages of 50S assembly. This is Large ribosomal subunit protein uL13 from Carboxydothermus hydrogenoformans (strain ATCC BAA-161 / DSM 6008 / Z-2901).